We begin with the raw amino-acid sequence, 121 residues long: MTTSAMTAPDTRRQLQHVETLRRFLRGDSCFVHDLRGMMDYHDGLSRRQQRAFCRASRVLTDPEPIQSEAEGENKQFTEHTHKVVSFFIKSVFVFPYLVLPNCCQVSVDRSRVPETGGRWL.

This sequence belongs to the HHV-5 UL30 protein family.

This is an uncharacterized protein from Human cytomegalovirus (strain AD169) (HHV-5).